The sequence spans 1269 residues: MSADNIEVIVKGTPSYTKSKNSDIKYQLGKESNVSHLRTFLSFEESTKFYTSYDLIENSRVVDDEDVLGDLAGNGSSLTFQFKPKAYNLVTAVQHIVGLRETLGFSSELEDGISEFAISSGSQFQDMSLEPNSEKSNGSETTISDQEKVKFLQTCNELLESTNTDFNIASLKTGNLLVTPVLKSLHFSAYNPVPAFYKNKGHLLYLQASTLENETFHITTSISGFYVNKSSSVKFDPSPKDEFEPKFNLIDLLTQVSKKFHQHVTSLRNKLSSTDSAQYVKPASCFLSKPWLVSQLPSNNGDFMRTQLEHFNNDDERNFCDEFQAIKDLEINSSYDRLKNEKITAGLIHEFNSEAVKGAMAIFNNELTPIDPGTTGENAVYFHKSLIFSFVADVSGTYSSIGGNEAAYAVANQDLQIINSLNRLGLKGIRHCLTAIIDYAGHRLLVQSPVPGLLTPVGVNIIVDEEDKEVAEPMETLISVNYGYDDFVATLKFDEKFHEKVCEFSKNFYLKEHKVEEVDLRISSKSKGIFGVDQRAYILDLANTNPVDIEFVKAHYDDVKENKYPHRQVLLRRELVERWRAEKIAASGKTLQEASEDVSFIYNPDAYVIDGVEDENVADMSKFLNDTVLTLFLEDILKGNSNIPYDGQHLTDLFHTNGVNMRYLGKAIEFVKAKYEDQKQERAKYLSKIEQENKEYQDWETGYLVKVEKLIKERQEEINKYVQQGKEVPSKLKEQIQLDKADLKEPVRNEGCTVEVDQFEGLIAVCELEMIARSIKHIFRQQSKKLSSPTLVPHLVAFFLNLLFGKSYNESVTVENLDALFDINELEFAQYTREQLIEEVRVQAKLRFRYDLTSEWFDINEKRFSKYALIRAIAQKFGIQLINKEYFFTKEQYEKWKQAQDKKLRSKIVDPKQTFSINDFSLRPVIKGAEFQSLIAEELWIQGASLVNAVSVEEEEAEKKKEESKKAAADGEDAGSSGATSKEEEQAKERAKKMNEALTLLGQSIAFREDIFGLVHPSLVSSYLLLSNMYSRLGQYSQAVTFCNKAALLSERCYGVDSFETVRILSNLAYLEYGQGSIYNSALVLKKVHELLKLLAPFVHSGRVNVFNLLFQIAASTEDKKVQIKILNKLSELLLKITGSEETLPYGQNESRIANLYTSLDDMSHALSHIEKAKSIFSKELGLNDQTTLTSKQWSETIKGIITKQQQEKKLASAQQATKPANISQKKGKKSSSSSPALTNKSVDELLQFIEGPGASKSSKKSKKKHTKN.

In terms of domain architecture, Clu spans 297–552 (PSNNGDFMRT…NTNPVDIEFV (256 aa)). Positions 958 to 969 (EKKKEESKKAAA) are enriched in basic and acidic residues. Residues 958–989 (EKKKEESKKAAADGEDAGSSGATSKEEEQAKE) form a disordered region. TPR repeat units lie at residues 1020–1053 (VSSY…SERC) and 1147–1180 (GQNE…FSKE). A disordered region spans residues 1211–1269 (LASAQQATKPANISQKKGKKSSSSSPALTNKSVDELLQFIEGPGASKSSKKSKKKHTKN). Polar residues predominate over residues 1213 to 1223 (SAQQATKPANI). A compositionally biased stretch (basic residues) spans 1258–1269 (SSKKSKKKHTKN).

This sequence belongs to the CLU family. May associate with the eukaryotic translation initiation factor 3 (eIF-3) complex.

It localises to the cytoplasm. Its function is as follows. mRNA-binding protein involved in proper cytoplasmic distribution of mitochondria. This is Clustered mitochondria protein homolog from Kluyveromyces lactis (strain ATCC 8585 / CBS 2359 / DSM 70799 / NBRC 1267 / NRRL Y-1140 / WM37) (Yeast).